Here is a 276-residue protein sequence, read N- to C-terminus: Adenylate kinase (276 aa).

52-57 (GAGKGT) contacts ATP. Positions 72–101 (ATGDMLRAQVAAKTPLGREAKKIMDAGGLV) are NMP. AMP is bound by residues Thr-73, Arg-78, 99 to 101 (GLV), 128 to 131 (GFPR), and Gln-135. An LID region spans residues 169–206 (GRLVHPASGRSYHKIFNPPKAPMTDDVTGEPLIQRSDD). ATP is bound by residues Arg-170 and 179–180 (SY). The AMP site is built by Arg-203 and Arg-214. ATP is bound at residue Gln-242.

This sequence belongs to the adenylate kinase family. AK2 subfamily. In terms of assembly, monomer.

It is found in the cytoplasm. The protein resides in the cytosol. Its subcellular location is the mitochondrion intermembrane space. The catalysed reaction is AMP + ATP = 2 ADP. Its function is as follows. Catalyzes the reversible transfer of the terminal phosphate group between ATP and AMP. Plays an important role in cellular energy homeostasis and in adenine nucleotide metabolism. Adenylate kinase activity is critical for regulation of the phosphate utilization and the AMP de novo biosynthesis pathways. The polypeptide is Adenylate kinase (adk1) (Pyrenophora tritici-repentis (strain Pt-1C-BFP) (Wheat tan spot fungus)).